The sequence spans 209 residues: Uracil phosphoribosyltransferase (209 aa).

5-phospho-alpha-D-ribose 1-diphosphate contacts are provided by residues arginine 79, arginine 104, and 131–139 (DPMLATGGS). Uracil is bound by residues isoleucine 194 and 199 to 201 (GDA). Residue aspartate 200 coordinates 5-phospho-alpha-D-ribose 1-diphosphate.

Belongs to the UPRTase family. The cofactor is Mg(2+).

The catalysed reaction is UMP + diphosphate = 5-phospho-alpha-D-ribose 1-diphosphate + uracil. The protein operates within pyrimidine metabolism; UMP biosynthesis via salvage pathway; UMP from uracil: step 1/1. With respect to regulation, allosterically activated by GTP. Its function is as follows. Catalyzes the conversion of uracil and 5-phospho-alpha-D-ribose 1-diphosphate (PRPP) to UMP and diphosphate. The polypeptide is Uracil phosphoribosyltransferase (Clostridioides difficile (strain 630) (Peptoclostridium difficile)).